The primary structure comprises 393 residues: NADH-quinone oxidoreductase subunit D (393 aa).

Belongs to the complex I 49 kDa subunit family. As to quaternary structure, NDH-1 is composed of 14 different subunits. Subunits NuoB, C, D, E, F, and G constitute the peripheral sector of the complex.

Its subcellular location is the cell inner membrane. It catalyses the reaction a quinone + NADH + 5 H(+)(in) = a quinol + NAD(+) + 4 H(+)(out). Functionally, NDH-1 shuttles electrons from NADH, via FMN and iron-sulfur (Fe-S) centers, to quinones in the respiratory chain. The immediate electron acceptor for the enzyme in this species is believed to be ubiquinone. Couples the redox reaction to proton translocation (for every two electrons transferred, four hydrogen ions are translocated across the cytoplasmic membrane), and thus conserves the redox energy in a proton gradient. The sequence is that of NADH-quinone oxidoreductase subunit D from Ehrlichia ruminantium (strain Welgevonden).